Reading from the N-terminus, the 266-residue chain is Thymidylate synthase (266 aa).

DUMP-binding positions include arginine 20 and 129-130 (RR). Catalysis depends on cysteine 149, which acts as the Nucleophile. Residues 169-172 (RSCD), asparagine 180, and 210-212 (HVY) contribute to the dUMP site. Aspartate 172 lines the (6R)-5,10-methylene-5,6,7,8-tetrahydrofolate pocket. (6R)-5,10-methylene-5,6,7,8-tetrahydrofolate is bound at residue alanine 265.

It belongs to the thymidylate synthase family. Bacterial-type ThyA subfamily. Homodimer.

The protein resides in the cytoplasm. It carries out the reaction dUMP + (6R)-5,10-methylene-5,6,7,8-tetrahydrofolate = 7,8-dihydrofolate + dTMP. It functions in the pathway pyrimidine metabolism; dTTP biosynthesis. Its function is as follows. Catalyzes the reductive methylation of 2'-deoxyuridine-5'-monophosphate (dUMP) to 2'-deoxythymidine-5'-monophosphate (dTMP) while utilizing 5,10-methylenetetrahydrofolate (mTHF) as the methyl donor and reductant in the reaction, yielding dihydrofolate (DHF) as a by-product. This enzymatic reaction provides an intracellular de novo source of dTMP, an essential precursor for DNA biosynthesis. The chain is Thymidylate synthase from Bifidobacterium longum (strain NCC 2705).